Consider the following 29-residue polypeptide: VSCEDCPDHCSTQKARAKCDNDKCVCEPI.

Intrachain disulfides connect C3–C19, C6–C24, and C10–C26.

It belongs to the short scorpion toxin superfamily. Potassium channel inhibitor family. Alpha-KTx 08 subfamily. As to expression, expressed by the venom gland.

It localises to the secreted. Specific and potent inhibitor of ClC-2/CLCN2 chloride channel. It slows ClC-2/CLCN2 activation by increasing the latency to first opening by nearly 8-fold but is unable to inhibit open channels, suggesting that this toxin inhibits channel activation gating. This Leiurus hebraeus (Hebrew deathstalker scorpion) protein is Potassium channel toxin alpha-KTx 8.3.